Consider the following 576-residue polypeptide: Colicin-E7 (576 aa).

Disordered regions lie at residues 1-75 (MSGG…GGGS), 421-478 (SSAL…PVPD), and 506-557 (DPEL…GVYD). A compositionally biased stretch (gly residues) spans 19–35 (NINGGPTGLGGNGGASD). The span at 36–45 (GSGWSSENNP) shows a compositional bias: low complexity. The segment covering 46–75 (WGGGSGSGVHWGGGSGHGNGGGNSNSGGGS) has biased composition (gly residues). Basic and acidic residues-rich tracts occupy residues 424-447 (LERR…ESKR) and 535-548 (SGKR…HEKP). Zn(2+) contacts are provided by His-544, His-569, and His-573.

Belongs to the colicin/pyosin nuclease family.

This plasmid-coded bactericidal protein is an endonuclease active on both single- and double-stranded DNA but with undefined specificity. Its function is as follows. Colicins are polypeptide toxins produced by and active against E.coli and closely related bacteria. This chain is Colicin-E7 (colE7), found in Escherichia coli.